The sequence spans 304 residues: tRNA pseudouridine synthase B (304 aa).

Aspartate 38 (nucleophile) is an active-site residue.

The protein belongs to the pseudouridine synthase TruB family. Type 1 subfamily.

The enzyme catalyses uridine(55) in tRNA = pseudouridine(55) in tRNA. Responsible for synthesis of pseudouridine from uracil-55 in the psi GC loop of transfer RNAs. The chain is tRNA pseudouridine synthase B from Listeria welshimeri serovar 6b (strain ATCC 35897 / DSM 20650 / CCUG 15529 / CIP 8149 / NCTC 11857 / SLCC 5334 / V8).